Reading from the N-terminus, the 193-residue chain is Ribonuclease HII (193 aa).

The RNase H type-2 domain maps to 15-193 (CIVAGIDEAG…PYHRRSFRCC (179 aa)). Residues Asp-21, Glu-22, and Asp-112 each coordinate a divalent metal cation.

The protein belongs to the RNase HII family. Mn(2+) is required as a cofactor. It depends on Mg(2+) as a cofactor.

Its subcellular location is the cytoplasm. It catalyses the reaction Endonucleolytic cleavage to 5'-phosphomonoester.. Functionally, endonuclease that specifically degrades the RNA of RNA-DNA hybrids. The protein is Ribonuclease HII of Rickettsia rickettsii (strain Iowa).